The following is a 378-amino-acid chain: MKYELQKTDGRARRGRLVFERGVVETPAFMPVGTYGTVKGMTPEEVKETGAQILLGNTFHLWLRPGQEIMKLHGDLHDFMQWHGPILTDSGGFQVFSLGAMRKIKEEGVTFQNPINGDKVFLSPEKSMEIQYDLGSDIVMIFDECTPYPADWDYAKRSMEMSLRWAKRSRDRFDELNNKNALFGIIQGGVYEDLRDVSVKGLVDIGFDGYAVGGLAVGEPKEDMHRILEHVCPQIPADKPRYLMGVGKPEDLVEGVRRGIDMFDCVMPTRNARNGHLFVTDGVVKIRNAKHKSDTATLDEHCDCYTCRNYSRAYLHHLDRCNEILGARLNTIHNLRYYQRLMASLRQAIEEGKLESFVEYFYGRIGKPVPPLSPQLTD.

The active-site Proton acceptor is the aspartate 89. Substrate contacts are provided by residues 89 to 93 (DSGGF), aspartate 143, glutamine 187, and glycine 214. The segment at 245 to 251 (GVGKPED) is RNA binding. The Nucleophile role is filled by aspartate 264. An RNA binding; important for wobble base 34 recognition region spans residues 269–273 (TRNAR). Zn(2+)-binding residues include cysteine 302, cysteine 304, cysteine 307, and histidine 333.

This sequence belongs to the queuine tRNA-ribosyltransferase family. Homodimer. Within each dimer, one monomer is responsible for RNA recognition and catalysis, while the other monomer binds to the replacement base PreQ1. Zn(2+) is required as a cofactor.

It carries out the reaction 7-aminomethyl-7-carbaguanine + guanosine(34) in tRNA = 7-aminomethyl-7-carbaguanosine(34) in tRNA + guanine. Its pathway is tRNA modification; tRNA-queuosine biosynthesis. Its function is as follows. Catalyzes the base-exchange of a guanine (G) residue with the queuine precursor 7-aminomethyl-7-deazaguanine (PreQ1) at position 34 (anticodon wobble position) in tRNAs with GU(N) anticodons (tRNA-Asp, -Asn, -His and -Tyr). Catalysis occurs through a double-displacement mechanism. The nucleophile active site attacks the C1' of nucleotide 34 to detach the guanine base from the RNA, forming a covalent enzyme-RNA intermediate. The proton acceptor active site deprotonates the incoming PreQ1, allowing a nucleophilic attack on the C1' of the ribose to form the product. After dissociation, two additional enzymatic reactions on the tRNA convert PreQ1 to queuine (Q), resulting in the hypermodified nucleoside queuosine (7-(((4,5-cis-dihydroxy-2-cyclopenten-1-yl)amino)methyl)-7-deazaguanosine). The polypeptide is Queuine tRNA-ribosyltransferase (Yersinia enterocolitica serotype O:8 / biotype 1B (strain NCTC 13174 / 8081)).